We begin with the raw amino-acid sequence, 294 residues long: Deubiquitinase OTUD6B (294 aa).

Disordered stretches follow at residues 1–46 (MDEA…RKQL) and 67–120 (AFAQ…ERDE). 2 stretches are compositionally biased toward polar residues: residues 27 to 36 (KIQSMKNSVP) and 73 to 86 (PEPT…NGVT). Residues 111–120 (KAAQEKERDE) show a composition bias toward basic and acidic residues. Residues 150–287 (LQIRQIPSDG…GEHYNSVELL (138 aa)) enclose the OTU domain. The tract at residues 155–161 (IPSDGHC) is cys-loop. Residue aspartate 158 is part of the active site. Catalysis depends on cysteine 161, which acts as the Nucleophile. The interval 222-232 (IVNTPAWGGQL) is variable-loop. Residues 270-280 (YMRHAYGLGEH) form a his-loop region. The active site involves histidine 280.

The enzyme catalyses Thiol-dependent hydrolysis of ester, thioester, amide, peptide and isopeptide bonds formed by the C-terminal Gly of ubiquitin (a 76-residue protein attached to proteins as an intracellular targeting signal).. Functionally, deubiquitinating enzyme that may play a role in the ubiquitin-dependent regulation of different cellular processes. The polypeptide is Deubiquitinase OTUD6B (otud6b) (Xenopus tropicalis (Western clawed frog)).